Here is a 510-residue protein sequence, read N- to C-terminus: NAD(P)H-quinone oxidoreductase subunit 2 A, chloroplastic (510 aa).

Helical transmembrane passes span 31-51, 59-79, 99-119, 124-144, 149-169, 183-203, 229-249, 295-315, 323-343, 354-374, 395-415, and 418-438; these read FIFP…IDLT, WFYF…LFRW, IFQF…VEYI, MAIT…MFLC, LITI…LSGY, YLLM…WLYG, ISIA…PAPF, WHLL…LLAI, MLAY…IVGD, YMLF…LFGL, ALSL…AGFF, and LYLF…IGLL.

Belongs to the complex I subunit 2 family. In terms of assembly, NDH is composed of at least 16 different subunits, 5 of which are encoded in the nucleus.

The protein localises to the plastid. The protein resides in the chloroplast thylakoid membrane. It carries out the reaction a plastoquinone + NADH + (n+1) H(+)(in) = a plastoquinol + NAD(+) + n H(+)(out). The catalysed reaction is a plastoquinone + NADPH + (n+1) H(+)(in) = a plastoquinol + NADP(+) + n H(+)(out). Its function is as follows. NDH shuttles electrons from NAD(P)H:plastoquinone, via FMN and iron-sulfur (Fe-S) centers, to quinones in the photosynthetic chain and possibly in a chloroplast respiratory chain. The immediate electron acceptor for the enzyme in this species is believed to be plastoquinone. Couples the redox reaction to proton translocation, and thus conserves the redox energy in a proton gradient. The protein is NAD(P)H-quinone oxidoreductase subunit 2 A, chloroplastic of Oryza nivara (Indian wild rice).